A 124-amino-acid polypeptide reads, in one-letter code: Small ribosomal subunit protein uS13 (124 aa).

The interval 98-124 (VRGQRTRCNARTRKGPRKTVGAKRKEK) is disordered.

Belongs to the universal ribosomal protein uS13 family. In terms of assembly, part of the 30S ribosomal subunit. Forms a loose heterodimer with protein S19. Forms two bridges to the 50S subunit in the 70S ribosome.

Located at the top of the head of the 30S subunit, it contacts several helices of the 16S rRNA. In the 70S ribosome it contacts the 23S rRNA (bridge B1a) and protein L5 of the 50S subunit (bridge B1b), connecting the 2 subunits; these bridges are implicated in subunit movement. Contacts the tRNAs in the A and P-sites. This chain is Small ribosomal subunit protein uS13, found in Dictyoglomus turgidum (strain DSM 6724 / Z-1310).